Consider the following 236-residue polypeptide: Chorionic somatomammotropin hormone (236 aa).

The first 36 residues, 1–36 (MAPASSHREHQWTCNLVRGSRLLLLLVVSNLILCQG), serve as a signal peptide directing secretion. Cystine bridges form between C44/C51, C97/C212, and C229/C234.

This sequence belongs to the somatotropin/prolactin family.

The protein resides in the secreted. The polypeptide is Chorionic somatomammotropin hormone (CSH) (Ovis aries (Sheep)).